The chain runs to 245 residues: Leucyl/phenylalanyl-tRNA--protein transferase (245 aa).

The protein belongs to the L/F-transferase family.

The protein localises to the cytoplasm. It catalyses the reaction N-terminal L-lysyl-[protein] + L-leucyl-tRNA(Leu) = N-terminal L-leucyl-L-lysyl-[protein] + tRNA(Leu) + H(+). The enzyme catalyses N-terminal L-arginyl-[protein] + L-leucyl-tRNA(Leu) = N-terminal L-leucyl-L-arginyl-[protein] + tRNA(Leu) + H(+). It carries out the reaction L-phenylalanyl-tRNA(Phe) + an N-terminal L-alpha-aminoacyl-[protein] = an N-terminal L-phenylalanyl-L-alpha-aminoacyl-[protein] + tRNA(Phe). Its function is as follows. Functions in the N-end rule pathway of protein degradation where it conjugates Leu, Phe and, less efficiently, Met from aminoacyl-tRNAs to the N-termini of proteins containing an N-terminal arginine or lysine. This chain is Leucyl/phenylalanyl-tRNA--protein transferase, found in Paraburkholderia phymatum (strain DSM 17167 / CIP 108236 / LMG 21445 / STM815) (Burkholderia phymatum).